The sequence spans 237 residues: Small ribosomal subunit protein uS3 (237 aa).

Residues 39–107 form the KH type-2 domain; the sequence is IRAYLMEELK…ETHLNIVEVR (69 aa). A disordered region spans residues 213 to 237; it reads MASERRATESDNQGGSGRERRRENA.

It belongs to the universal ribosomal protein uS3 family. As to quaternary structure, part of the 30S ribosomal subunit. Forms a tight complex with proteins S10 and S14.

In terms of biological role, binds the lower part of the 30S subunit head. Binds mRNA in the 70S ribosome, positioning it for translation. This is Small ribosomal subunit protein uS3 from Rhizobium meliloti (strain 1021) (Ensifer meliloti).